A 69-amino-acid polypeptide reads, in one-letter code: Protein transport protein Sec61 subunit gamma (69 aa).

The Cytoplasmic segment spans residues 1–32 (MDAVDSVVDPLREFAKDSVRLVKRCHKPDRKE). A helical transmembrane segment spans residues 33-61 (FTKVAARTAIGFVVMGFVGFFVKLIFIPI). At 62–69 (NNIIVGSG) the chain is on the extracellular side.

This sequence belongs to the SecE/SEC61-gamma family. In terms of assembly, heterotrimeric complex composed of SEC61-alpha, SEC61-beta and SEC61-gamma.

The protein resides in the endoplasmic reticulum membrane. Functionally, necessary for protein translocation in the endoplasmic reticulum. The protein is Protein transport protein Sec61 subunit gamma of Oryza sativa subsp. japonica (Rice).